The primary structure comprises 49 residues: DNA-directed RNA polymerase subunit Rpo12 (49 aa).

Zn(2+)-binding residues include Cys11, Cys27, and Cys30.

This sequence belongs to the archaeal Rpo12/eukaryotic RPC10 RNA polymerase subunit family. Part of the RNA polymerase complex. Requires Zn(2+) as cofactor.

It localises to the cytoplasm. The enzyme catalyses RNA(n) + a ribonucleoside 5'-triphosphate = RNA(n+1) + diphosphate. DNA-dependent RNA polymerase (RNAP) catalyzes the transcription of DNA into RNA using the four ribonucleoside triphosphates as substrates. The chain is DNA-directed RNA polymerase subunit Rpo12 from Pyrococcus horikoshii (strain ATCC 700860 / DSM 12428 / JCM 9974 / NBRC 100139 / OT-3).